A 276-amino-acid polypeptide reads, in one-letter code: Secretagogin (276 aa).

EF-hand domains follow at residues 12–47 (LDAA…LLAK), 105–140 (DNSV…LFLH), 149–184 (ELEE…QENF), 197–232 (ERKR…MMEL), and 240–276 (VDLD…KINP). Asp118, Asp120, Ser122, Glu129, Asp162, Asn164, Asp166, Arg168, Asp173, Asp210, Ser212, Thr214, Glu221, Asp254, Asn256, Asp258, Lys260, and Glu265 together coordinate Ca(2+).

Highly expressed in pancreas, in particular in pancreatic islets and pancreatic beta-cells. Detected in prostate, adrenal gland, small intestine, stomach and thyroid (at protein level).

It localises to the cytoplasm. Its subcellular location is the secreted. The protein resides in the cytoplasmic vesicle. It is found in the secretory vesicle membrane. The chain is Secretagogin (Scgn) from Rattus norvegicus (Rat).